The primary structure comprises 261 residues: Cytochrome c oxidase subunit 3 (261 aa).

Residues 1-15 are Mitochondrial matrix-facing; sequence MAHQAHAYHMVDPSP. The helical transmembrane segment at 16–34 threads the bilayer; it reads WPLTGAVAALLMSSGLAIW. Residues 35–40 are Mitochondrial intermembrane-facing; it reads FHLHSM. Residues 41-66 form a helical membrane-spanning segment; the sequence is TLIVLGMILLILTMIQWWRDIIREGT. Over 67 to 72 the chain is Mitochondrial matrix; it reads FQGHHT. Residues 73–105 form a helical membrane-spanning segment; the sequence is PPVQKGLRYGMILFITSEVFFFLGFFWAFYHSS. Residues 106–128 lie on the Mitochondrial intermembrane side of the membrane; it reads LAPTPELGGCWPPTGLTTLDPFE. Residues 129–152 traverse the membrane as a helical segment; the sequence is VPLLNTAVLLASGVTVTWAHHSLM. Topologically, residues 153-155 are mitochondrial matrix; it reads EGE. A helical membrane pass occupies residues 156-183; the sequence is RKQAIQSLALTILLGLYFTALQAMEYYE. At 184–190 the chain is on the mitochondrial intermembrane side; the sequence is APFTIAD. Residues 191–223 traverse the membrane as a helical segment; the sequence is GVYGSTFFVATGFHGLHVIIGSTFLAVCLLRQV. The Mitochondrial matrix portion of the chain corresponds to 224–232; it reads LFHFTSDHH. The chain crosses the membrane as a helical span at residues 233-256; it reads FGFEAAAWYWHFVDVVWLFLYVSI. At 257–261 the chain is on the mitochondrial intermembrane side; sequence YWWGS.

It belongs to the cytochrome c oxidase subunit 3 family. Component of the cytochrome c oxidase (complex IV, CIV), a multisubunit enzyme composed of 14 subunits. The complex is composed of a catalytic core of 3 subunits MT-CO1, MT-CO2 and MT-CO3, encoded in the mitochondrial DNA, and 11 supernumerary subunits COX4I, COX5A, COX5B, COX6A, COX6B, COX6C, COX7A, COX7B, COX7C, COX8 and NDUFA4, which are encoded in the nuclear genome. The complex exists as a monomer or a dimer and forms supercomplexes (SCs) in the inner mitochondrial membrane with NADH-ubiquinone oxidoreductase (complex I, CI) and ubiquinol-cytochrome c oxidoreductase (cytochrome b-c1 complex, complex III, CIII), resulting in different assemblies (supercomplex SCI(1)III(2)IV(1) and megacomplex MCI(2)III(2)IV(2)).

It localises to the mitochondrion inner membrane. It carries out the reaction 4 Fe(II)-[cytochrome c] + O2 + 8 H(+)(in) = 4 Fe(III)-[cytochrome c] + 2 H2O + 4 H(+)(out). Its function is as follows. Component of the cytochrome c oxidase, the last enzyme in the mitochondrial electron transport chain which drives oxidative phosphorylation. The respiratory chain contains 3 multisubunit complexes succinate dehydrogenase (complex II, CII), ubiquinol-cytochrome c oxidoreductase (cytochrome b-c1 complex, complex III, CIII) and cytochrome c oxidase (complex IV, CIV), that cooperate to transfer electrons derived from NADH and succinate to molecular oxygen, creating an electrochemical gradient over the inner membrane that drives transmembrane transport and the ATP synthase. Cytochrome c oxidase is the component of the respiratory chain that catalyzes the reduction of oxygen to water. Electrons originating from reduced cytochrome c in the intermembrane space (IMS) are transferred via the dinuclear copper A center (CU(A)) of subunit 2 and heme A of subunit 1 to the active site in subunit 1, a binuclear center (BNC) formed by heme A3 and copper B (CU(B)). The BNC reduces molecular oxygen to 2 water molecules using 4 electrons from cytochrome c in the IMS and 4 protons from the mitochondrial matrix. The polypeptide is Cytochrome c oxidase subunit 3 (mt-co3) (Danio rerio (Zebrafish)).